Consider the following 803-residue polypeptide: Integrin beta-1 (803 aa).

An N-terminal signal peptide occupies residues 1 to 24; sequence MAETNLTLLTWAGILCCLIWSGSA. Gln25 is subject to Blocked amino end (Gln). Residues 25-733 lie on the Extracellular side of the membrane; it reads QQGGSDCIKA…ETPECPSGPD (709 aa). In terms of domain architecture, PSI spans 30 to 80; the sequence is DCIKANAKSCGECIQAGPNCGWCKKTDFLQEGEPTSARCDDLAALKSKGCP. 22 disulfides stabilise this stretch: Cys31–Cys49, Cys39–Cys469, Cys42–Cys68, Cys52–Cys79, Cys211–Cys217, Cys265–Cys305, Cys405–Cys419, Cys439–Cys467, Cys471–Cys491, Cys482–Cys494, Cys496–Cys505, Cys507–Cys538, Cys521–Cys536, Cys530–Cys541, Cys543–Cys558, Cys560–Cys581, Cys565–Cys579, Cys573–Cys584, Cys586–Cys595, Cys597–Cys620, Cys604–Cys618, and Cys612–Cys623. The VWFA domain maps to 144–382; the sequence is DYPIDLYYLM…QLIIDAYNSL (239 aa). Mg(2+) contacts are provided by Ser156 and Ser158. Ser158, Asp161, Asp162, and Glu193 together coordinate Ca(2+). Residues 211–217 form a CX3CL1-binding region; sequence CTGDQNC. Residue Asn216 is glycosylated (N-linked (GlcNAc...) asparagine). The Ca(2+) site is built by Asn248, Asp250, Pro252, and Glu253. Glu253 contributes to the Mg(2+) binding site. An N-linked (GlcNAc...) asparagine glycan is attached at Asn273. The CX3CL1-binding stretch occupies residues 299-318; it reads LPNDGKCHLENNMYTMSHYY. 6 N-linked (GlcNAc...) asparagine glycosylation sites follow: Asn367, Asn410, Asn421, Asn433, Asn445, and Asn486. The segment at 387 to 470 is interaction with TMEM182; the sequence is ILENSKLPKE…IHLQFICDCL (84 aa). 4 consecutive I-EGF domains span residues 471 to 506, 507 to 559, 560 to 596, and 597 to 636; these read CQSE…RLCE, CSTD…KYCE, CDNF…SACD, and CSLD…PTCE. Residue Asn525 is glycosylated (N-linked (GlcNAc...) asparagine). Asn589 carries N-linked (GlcNAc...) asparagine glycosylation. N-linked (GlcNAc...) asparagine glycosylation is present at Asn624. 6 cysteine pairs are disulfide-bonded: Cys625–Cys635, Cys638–Cys641, Cys645–Cys696, Cys651–Cys670, Cys654–Cys666, and Cys704–Cys728. Asn674 is a glycosylation site (N-linked (GlcNAc...) asparagine). A helical membrane pass occupies residues 734-756; that stretch reads IIPIVAGVVAGIVLIGLALLLIW. Residues 757–803 are Cytoplasmic-facing; the sequence is KLLMIIHDRREFAKFEKEKMNAKWDTGENPIYKSAVTTVVNPKYEGK. The residue at position 788 (Tyr788) is a Phosphotyrosine; by Tyr-kinases.

This sequence belongs to the integrin beta chain family. In terms of assembly, heterodimer of an alpha and a beta subunit. Beta-1 associates with either alpha-1, alpha-2, alpha-3, alpha-4, alpha-5, alpha-6, alpha-7, alpha-8, alpha-9, alpha-10, alpha-11 or alpha-V. Interacts with TMEM182 and LAMB1. Expressed on surface of embryonic fibroblasts (at protein level).

The protein resides in the cell membrane. The protein localises to the cell projection. It is found in the invadopodium membrane. It localises to the ruffle membrane. Its subcellular location is the melanosome. The protein resides in the lamellipodium. The protein localises to the ruffle. It is found in the cell junction. It localises to the focal adhesion. Functionally, integrins alpha-1/beta-1, alpha-2/beta-1, alpha-10/beta-1 and alpha-11/beta-1 are receptors for collagen. Integrins alpha-1/beta-1 and alpha-2/beta-1 recognize the proline-hydroxylated sequence G-F-P-G-E-R in collagen. Integrins alpha-2/beta-1, alpha-3/beta-1, alpha-4/beta-1, alpha-5/beta-1, alpha-8/beta-1, alpha-10/beta-1, alpha-11/beta-1 and alpha-V/beta-1 are receptors for fibronectin. Alpha-4/beta-1 recognizes one or more domains within the alternatively spliced CS-1 and CS-5 regions of fibronectin. Integrin alpha-5/beta-1 is a receptor for fibrinogen. Integrin alpha-1/beta-1, alpha-2/beta-1, alpha-6/beta-1 and alpha-7/beta-1 are receptors for lamimin. Integrin alpha-6/beta-1 (ITGA6:ITGB1) is present in oocytes and is involved in sperm-egg fusion. Integrin alpha-4/beta-1 is a receptor for VCAM1 and recognizes the sequence Q-I-D-S in VCAM1. Integrin alpha-9/beta-1 is a receptor for VCAM1, cytotactin and osteopontin. It recognizes the sequence A-E-I-D-G-I-E-L in cytotactin. Integrin alpha-3/beta-1 is a receptor for epiligrin, thrombospondin and CSPG4. Integrin alpha-3/beta-1 provides a docking site for FAP (seprase) at invadopodia plasma membranes in a collagen-dependent manner and hence may participate in the adhesion, formation of invadopodia and matrix degradation processes, promoting cell invasion. Alpha-3/beta-1 may mediate with LGALS3 the stimulation by CSPG4 of endothelial cells migration. Integrin alpha-V/beta-1 is a receptor for vitronectin. Beta-1 integrins recognize the sequence R-G-D in a wide array of ligands. When associated with alpha-7/beta-1 integrin, regulates cell adhesion and laminin matrix deposition. Involved in promoting endothelial cell motility and angiogenesis. Involved in osteoblast compaction through the fibronectin fibrillogenesis cell-mediated matrix assembly process and the formation of mineralized bone nodules. May be involved in up-regulation of the activity of kinases such as PKC via binding to KRT1. Together with KRT1 and RACK1, serves as a platform for SRC activation or inactivation. ITGA4:ITGB1 binds to fractalkine (CX3CL1) and may act as its coreceptor in CX3CR1-dependent fractalkine signaling. ITGA4:ITGB1 and ITGA5:ITGB1 bind to PLA2G2A via a site (site 2) which is distinct from the classical ligand-binding site (site 1) and this induces integrin conformational changes and enhanced ligand binding to site 1. ITGA5:ITGB1 acts as a receptor for fibrillin-1 (FBN1) and mediates R-G-D-dependent cell adhesion to FBN1. ITGA5:ITGB1 acts as a receptor for fibronectin FN1 and mediates R-G-D-dependent cell adhesion to FN1. ITGA5:ITGB1 is a receptor for IL1B and binding is essential for IL1B signaling. ITGA5:ITGB3 is a receptor for soluble CD40LG and is required for CD40/CD40LG signaling. Plays an important role in myoblast differentiation and fusion during skeletal myogenesis. This Gallus gallus (Chicken) protein is Integrin beta-1 (ITGB1).